Consider the following 848-residue polypeptide: Leucine--tRNA ligase (848 aa).

A compositionally biased stretch (basic and acidic residues) spans 1-16; it reads MCPEQPHDTRAERDEM. Residues 1-30 form a disordered region; that stretch reads MCPEQPHDTRAERDEMSEQTQQAAQPAETA. Residues 18–30 are compositionally biased toward low complexity; that stretch reads EQTQQAAQPAETA. The 'HIGH' region motif lies at 69–79; sequence PYPSGDLHMGH. The short motif at 614 to 618 is the 'KMSKS' region element; sequence KMSKS. Lys-617 contacts ATP.

Belongs to the class-I aminoacyl-tRNA synthetase family.

Its subcellular location is the cytoplasm. It carries out the reaction tRNA(Leu) + L-leucine + ATP = L-leucyl-tRNA(Leu) + AMP + diphosphate. The protein is Leucine--tRNA ligase of Nocardioides sp. (strain ATCC BAA-499 / JS614).